The following is a 62-amino-acid chain: Rubredoxin-2 (62 aa).

A Rubredoxin-like domain is found at 7–58 (MWRCQMVNCGYVYDPDRGDKRRKVPAGTKFEDLPEDWRCPVCGAGKKSFRRL). Residues Cys10, Cys15, Cys45, and Cys48 each contribute to the Fe cation site.

It belongs to the rubredoxin family. As to quaternary structure, monomer. Fe(3+) is required as a cofactor.

Its function is as follows. Rubredoxin is a small nonheme, iron protein lacking acid-labile sulfide. Its single Fe, chelated to 4 Cys, functions as an electron acceptor and may also stabilize the conformation of the molecule. The polypeptide is Rubredoxin-2 (rd2) (Desulfovibrio desulfuricans (strain ATCC 27774 / DSM 6949 / MB)).